Reading from the N-terminus, the 634-residue chain is Replication protein E1 (634 aa).

The short motif at 85–87 is the Nuclear localization signal element; that stretch reads KRK. Phosphoserine; by host is present on residues serine 91 and serine 95. The segment at 92-117 is disordered; it reads PRSSPLGDITNQNNTHSHSQANESQV. Polar residues predominate over residues 100 to 115; it reads ITNQNNTHSHSQANES. Residues 172-338 form a DNA-binding region region; that stretch reads CANVELNSIC…QTQLQHSFED (167 aa). Positions 437-587 constitute an SF3 helicase domain; sequence VNFMSFIQMF…FPFDNNGNAV (151 aa). 463 to 470 provides a ligand contact to ATP; the sequence is GPPNTGKS.

Belongs to the papillomaviridae E1 protein family. As to quaternary structure, can form hexamers. Interacts with E2 protein; this interaction increases E1 DNA binding specificity. Interacts with host DNA polymerase subunit POLA2. Interacts with host single stranded DNA-binding protein RPA1. Interacts with host TOP1; this interaction stimulates the enzymatic activity of TOP1. In terms of processing, phosphorylated.

It localises to the host nucleus. It catalyses the reaction Couples ATP hydrolysis with the unwinding of duplex DNA by translocating in the 3'-5' direction.. It carries out the reaction ATP + H2O = ADP + phosphate + H(+). Its function is as follows. ATP-dependent DNA 3'-5' helicase required for initiation of viral DNA replication. It forms a complex with the viral E2 protein. The E1-E2 complex binds to the replication origin which contains binding sites for both proteins. During the initial step, a dimer of E1 interacts with a dimer of protein E2 leading to a complex that binds the viral origin of replication with high specificity. Then, a second dimer of E1 displaces the E2 dimer in an ATP-dependent manner to form the E1 tetramer. Following this, two E1 monomers are added to each half of the site, which results in the formation of two E1 trimers on the viral ori. Subsequently, two hexamers will be created. The double hexamer acts as a bi-directional helicase machinery and unwinds the viral DNA and then recruits the host DNA polymerase to start replication. This chain is Replication protein E1, found in Homo sapiens (Human).